Reading from the N-terminus, the 1030-residue chain is Peroxisomal ATPase PEX6 (1030 aa).

The AAA-cassette D1 stretch occupies residues 478–683; that stretch reads VLLHSTTNNV…VETARMTATA (206 aa). The segment at 767–956 is AAA-cassette D2; it reads GILFYGPPGT…CSDAMLNAMS (190 aa). Residue 772 to 779 coordinates ATP; that stretch reads GPPGTGKT.

The protein belongs to the AAA ATPase family. As to quaternary structure, interacts with PEX1; forming the PEX1-PEX6 AAA ATPase complex, which is composed of a heterohexamer formed by a trimer of PEX1-PEX6 dimers. Interacts with PEX15; anchors PEX1-PEX6 heterooligomers to the peroxisomal membrane and mediates their association with the peroxisomal importomer. Interacts with UBP15.

It localises to the cytoplasm. Its subcellular location is the cytosol. The protein resides in the peroxisome membrane. The catalysed reaction is ATP + H2O = ADP + phosphate + H(+). Functionally, component of the PEX1-PEX6 AAA ATPase complex, a protein dislocase complex that mediates the ATP-dependent extraction of the PEX5 receptor from peroxisomal membranes, an essential step for PEX5 recycling. Specifically recognizes PEX5 monoubiquitinated at 'Cys-6', and pulls it out of the peroxisome lumen through the PEX2-PEX10-PEX12 retrotranslocation channel. Extraction by the PEX1-PEX6 AAA ATPase complex is accompanied by unfolding of the TPR repeats and release of bound cargo from PEX5. This Saccharomyces cerevisiae (strain ATCC 204508 / S288c) (Baker's yeast) protein is Peroxisomal ATPase PEX6.